A 235-amino-acid polypeptide reads, in one-letter code: Photosystem I assembly protein Ycf4 (235 aa).

2 helical membrane-spanning segments follow: residues 21-43 and 63-85; these read NLCW…TSSY and GIVM…CTIL.

This sequence belongs to the Ycf4 family.

It localises to the plastid. It is found in the chloroplast thylakoid membrane. In terms of biological role, seems to be required for the assembly of the photosystem I complex. The protein is Photosystem I assembly protein Ycf4 of Amborella trichopoda.